We begin with the raw amino-acid sequence, 583 residues long: Aspartate--tRNA ligase (583 aa).

Glu-174 is a binding site for L-aspartate. Positions 198 to 201 are aspartate; that stretch reads QITK. Arg-220 is an L-aspartate binding site. ATP contacts are provided by residues 220-222 and Gln-229; that span reads RDE. His-443 is an L-aspartate binding site. Residue Glu-477 participates in ATP binding. Residue Arg-484 participates in L-aspartate binding. 529 to 532 contributes to the ATP binding site; it reads GLDR.

It belongs to the class-II aminoacyl-tRNA synthetase family. Type 1 subfamily. Homodimer.

The protein localises to the cytoplasm. The enzyme catalyses tRNA(Asp) + L-aspartate + ATP = L-aspartyl-tRNA(Asp) + AMP + diphosphate. Catalyzes the attachment of L-aspartate to tRNA(Asp) in a two-step reaction: L-aspartate is first activated by ATP to form Asp-AMP and then transferred to the acceptor end of tRNA(Asp). In Streptococcus thermophilus (strain ATCC BAA-491 / LMD-9), this protein is Aspartate--tRNA ligase.